The sequence spans 310 residues: tRNA dimethylallyltransferase (310 aa).

15-22 provides a ligand contact to ATP; it reads GATASGKT. 17–22 is a binding site for substrate; the sequence is TASGKT.

Belongs to the IPP transferase family. As to quaternary structure, monomer. Mg(2+) is required as a cofactor.

The catalysed reaction is adenosine(37) in tRNA + dimethylallyl diphosphate = N(6)-dimethylallyladenosine(37) in tRNA + diphosphate. Functionally, catalyzes the transfer of a dimethylallyl group onto the adenine at position 37 in tRNAs that read codons beginning with uridine, leading to the formation of N6-(dimethylallyl)adenosine (i(6)A). The protein is tRNA dimethylallyltransferase of Nocardioides sp. (strain ATCC BAA-499 / JS614).